The chain runs to 263 residues: 3-methyl-2-oxobutanoate hydroxymethyltransferase (263 aa).

Mg(2+) is bound by residues Asp45 and Asp84. Residues 45–46 (DS), Asp84, and Lys112 each bind 3-methyl-2-oxobutanoate. Residue Glu114 coordinates Mg(2+). Residue Glu180 is the Proton acceptor of the active site.

Belongs to the PanB family. Homodecamer; pentamer of dimers. Requires Mg(2+) as cofactor.

Its subcellular location is the cytoplasm. The catalysed reaction is 3-methyl-2-oxobutanoate + (6R)-5,10-methylene-5,6,7,8-tetrahydrofolate + H2O = 2-dehydropantoate + (6S)-5,6,7,8-tetrahydrofolate. It participates in cofactor biosynthesis; (R)-pantothenate biosynthesis; (R)-pantoate from 3-methyl-2-oxobutanoate: step 1/2. Its function is as follows. Catalyzes the reversible reaction in which hydroxymethyl group from 5,10-methylenetetrahydrofolate is transferred onto alpha-ketoisovalerate to form ketopantoate. This chain is 3-methyl-2-oxobutanoate hydroxymethyltransferase, found in Klebsiella pneumoniae (strain 342).